A 282-amino-acid polypeptide reads, in one-letter code: Undecaprenyl-diphosphatase (282 aa).

Transmembrane regions (helical) follow at residues 90–110, 121–141, 194–214, 228–248, and 256–276; these read YRLG…GLFF, LWVV…AEYV, FGFL…LPDA, QLLV…AWLL, and MYWF…LLAT.

This sequence belongs to the UppP family.

The protein resides in the cell membrane. It carries out the reaction di-trans,octa-cis-undecaprenyl diphosphate + H2O = di-trans,octa-cis-undecaprenyl phosphate + phosphate + H(+). Catalyzes the dephosphorylation of undecaprenyl diphosphate (UPP). Confers resistance to bacitracin. This Mycobacterium tuberculosis (strain ATCC 25618 / H37Rv) protein is Undecaprenyl-diphosphatase.